Consider the following 362-residue polypeptide: GDSL esterase/lipase 6 (362 aa).

A signal peptide spans 1 to 23; the sequence is MSSSSSMDLLMCLLLLISPVVLA. Ser38 (nucleophile) is an active-site residue. N-linked (GlcNAc...) asparagine glycosylation is found at Asn50, Asn103, Asn107, Asn195, and Asn296. Catalysis depends on residues Asp323 and His326.

Belongs to the 'GDSL' lipolytic enzyme family.

Its subcellular location is the secreted. This Arabidopsis thaliana (Mouse-ear cress) protein is GDSL esterase/lipase 6 (GLIP6).